Consider the following 382-residue polypeptide: Histidinol-phosphate aminotransferase (382 aa).

K215 carries the N6-(pyridoxal phosphate)lysine modification. A disordered region spans residues 363–382 (NIDNQSKTHSQTSSIRKGTI).

Belongs to the class-II pyridoxal-phosphate-dependent aminotransferase family. Histidinol-phosphate aminotransferase subfamily. Homodimer. Pyridoxal 5'-phosphate is required as a cofactor.

It carries out the reaction L-histidinol phosphate + 2-oxoglutarate = 3-(imidazol-4-yl)-2-oxopropyl phosphate + L-glutamate. Its pathway is amino-acid biosynthesis; L-histidine biosynthesis; L-histidine from 5-phospho-alpha-D-ribose 1-diphosphate: step 7/9. The sequence is that of Histidinol-phosphate aminotransferase from Yersinia pseudotuberculosis serotype O:3 (strain YPIII).